The sequence spans 503 residues: ATP synthase subunit alpha (503 aa).

170–177 (GDKQTGKT) is a binding site for ATP.

Belongs to the ATPase alpha/beta chains family. F-type ATPases have 2 components, CF(1) - the catalytic core - and CF(0) - the membrane proton channel. CF(1) has five subunits: alpha(3), beta(3), gamma(1), delta(1), epsilon(1). CF(0) has three main subunits: a(1), b(2) and c(9-12). The alpha and beta chains form an alternating ring which encloses part of the gamma chain. CF(1) is attached to CF(0) by a central stalk formed by the gamma and epsilon chains, while a peripheral stalk is formed by the delta and b chains.

Its subcellular location is the cell inner membrane. The catalysed reaction is ATP + H2O + 4 H(+)(in) = ADP + phosphate + 5 H(+)(out). Its function is as follows. Produces ATP from ADP in the presence of a proton gradient across the membrane. The alpha chain is a regulatory subunit. The polypeptide is ATP synthase subunit alpha (Helicobacter pylori (strain P12)).